We begin with the raw amino-acid sequence, 462 residues long: ATP synthase subunit beta (462 aa).

An ATP-binding site is contributed by 151 to 158; that stretch reads GGAGVGKT.

Belongs to the ATPase alpha/beta chains family. As to quaternary structure, F-type ATPases have 2 components, CF(1) - the catalytic core - and CF(0) - the membrane proton channel. CF(1) has five subunits: alpha(3), beta(3), gamma(1), delta(1), epsilon(1). CF(0) has four main subunits: a(1), b(1), b'(1) and c(9-12).

It localises to the cell inner membrane. It carries out the reaction ATP + H2O + 4 H(+)(in) = ADP + phosphate + 5 H(+)(out). Produces ATP from ADP in the presence of a proton gradient across the membrane. The catalytic sites are hosted primarily by the beta subunits. This is ATP synthase subunit beta from Chlorobium phaeovibrioides (strain DSM 265 / 1930) (Prosthecochloris vibrioformis (strain DSM 265)).